Consider the following 89-residue polypeptide: MADDAAPHADVLNSTAQGQLKSIIDRVERLEVEKTEIAEQIKEVYLEAKGNGFDVKILRKVVRLRKTDRAKRQEEDAILDLYLSAIGEI.

This sequence belongs to the UPF0335 family.

This chain is UPF0335 protein Caul_0876, found in Caulobacter sp. (strain K31).